The primary structure comprises 433 residues: Transcobalamin-1 (433 aa).

The first 23 residues, 1 to 23 (MRQSHQLPLVGLLLFSFIPSQLC), serve as a signal peptide directing secretion. The globular N-terminal alpha domain stretch occupies residues 24–310 (EICEVSEENY…DINKDSSCVS (287 aa)). 3 cysteine pairs are disulfide-bonded: Cys26-Cys265, Cys105-Cys308, and Cys155-Cys197. Residue 142 to 146 (TNYYQ) participates in cyanocob(III)alamin binding. Residue Asn160 is glycosylated (N-linked (GlcNAc...) asparagine). Position 186 (Asp186) interacts with cyanocob(III)alamin. Asn216 is a glycosylation site (N-linked (GlcNAc...) asparagine). Residues Asn240 and Gln289 each contribute to the cyanocob(III)alamin site. Residues 311-332 (ASGNFNISADEPITVTPPDSQS) are flexible linker. N-linked (GlcNAc...) asparagine glycans are attached at residues Asn316, Asn337, Asn343, Asn349, Asn354, and Asn369. Residues 333–433 (YISVNYSVRI…ENLEVRWSKY (101 aa)) are globular C-terminal beta domain. Residue 385–386 (YI) coordinates cyanocob(III)alamin. A disulfide bridge links Cys388 with Cys393. Cyanocob(III)alamin-binding positions include 402–404 (WEL), Leu411, and Tyr433.

This sequence belongs to the eukaryotic cobalamin transport proteins family. In terms of processing, contains about 30% carbohydrates. Produced by the salivary glands of the oral cavity, in response to ingestion of food. Major constituent of secondary granules in neutrophils.

It is found in the secreted. Functionally, binds vitamin B12 with femtomolar affinity and protects it from the acidic environment of the stomach. The sequence is that of Transcobalamin-1 (TCN1) from Homo sapiens (Human).